The chain runs to 170 residues: Small ribosomal subunit protein bS18c (170 aa).

2 disordered regions span residues 1-60 (MYTS…GPGD) and 149-170 (NRNL…SSDC). Repeats lie at residues 4–10 (SKQPFLK), 11–17 (SKQPFSK), 18–24 (SEQPFSK), 25–31 (SEQPFRK), 32–38 (SKQTFRK), 39–45 (FKQPFRK), and 46–52 (SKQPFRR). A 7 X 7 AA tandem repeats region spans residues 4–52 (SKQPFLKSKQPFSKSEQPFSKSEQPFRKSKQTFRKFKQPFRKSKQPFRR). Positions 13 to 26 (QPFSKSEQPFSKSE) are enriched in polar residues. Positions 30–55 (RKSKQTFRKFKQPFRKSKQPFRRRPR) are enriched in basic residues.

It belongs to the bacterial ribosomal protein bS18 family. In terms of assembly, part of the 30S ribosomal subunit.

Its subcellular location is the plastid. The protein resides in the chloroplast. This is Small ribosomal subunit protein bS18c (rps18) from Secale cereale (Rye).